We begin with the raw amino-acid sequence, 260 residues long: ATP synthase subunit a (260 aa).

7 helical membrane passes run 30–50 (IAFTNSALWMAITTAVLIVFV), 96–116 (LFAFILFANMLGLLPLALVGV), 125–145 (FTVTGVLAIMSFAIVLGVGFA), 151–171 (FFSLFVPHGTPVPMIPIIFPI), 187–207 (LFVAMMAGHVLLEVLSGFVIS), 213–233 (VGTFFLAAVPSFLLMIGICAL), and 234–254 (ELLVAGIQAYVFALLTCVYLN).

It belongs to the ATPase A chain family. F-type ATPases have 2 components, CF(1) - the catalytic core - and CF(0) - the membrane proton channel. CF(1) has five subunits: alpha(3), beta(3), gamma(1), delta(1), epsilon(1). CF(0) has three main subunits: a(1), b(2) and c(9-12). The alpha and beta chains form an alternating ring which encloses part of the gamma chain. CF(1) is attached to CF(0) by a central stalk formed by the gamma and epsilon chains, while a peripheral stalk is formed by the delta and b chains.

The protein localises to the cell inner membrane. In terms of biological role, key component of the proton channel; it plays a direct role in the translocation of protons across the membrane. This is ATP synthase subunit a from Novosphingobium aromaticivorans (strain ATCC 700278 / DSM 12444 / CCUG 56034 / CIP 105152 / NBRC 16084 / F199).